Here is a 933-residue protein sequence, read N- to C-terminus: Anoctamin-7 (933 aa).

Residues 1–355 (MRMAATAWAG…YFAWLGFYTG (355 aa)) lie on the Cytoplasmic side of the membrane. Residues 43 to 101 (ETSSGSHCARSRMLRRRAQEEDSTVLIDVSPPEAEKRGSYGSTAHASEPGGQQAAACRA) are disordered. The helical transmembrane segment at 356-376 (WLLPAAVVGTLVFLVGCFLVF) threads the bilayer. Residues 377–420 (SDIPTQELCGSKDSFEMCPLCLDCPFWLLSSACALAQAGRLFDH) lie on the Extracellular side of the membrane. Residues 421-441 (GGTVFFSLFMALWAVLLLEYW) traverse the membrane as a helical segment. Over 442–499 (KRKSATLAYRWDCSDYEDTEERPRPQFAASAPMTAPNPITGEDEPYFPERSRARRMLA) the chain is Cytoplasmic. Residues 500 to 520 (GSVVIVVMVAVVVMCLVSIIL) traverse the membrane as a helical segment. Residues 521–550 (YRAIMAIVVSRSGNTLLAAWASRIASLTGS) lie on the Extracellular side of the membrane. A helical transmembrane segment spans residues 551-571 (VVNLVFILILSKIYVSLAHVL). Residues 572–588 (TRWEMHRTQTKFEDAFT) are Cytoplasmic-facing. Residues 589–609 (LKVFIFQFVNFYSSPVYIAFF) form a helical membrane-spanning segment. Topologically, residues 610–714 (KGRFVGYPGN…FDEYLEMVLQ (105 aa)) are extracellular. A helical membrane pass occupies residues 715–735 (FGFVTIFVAACPLAPLFALLN). Residues 736–763 (NWVEIRLDARKFVCEYRRPVAERAQDIG) lie on the Cytoplasmic side of the membrane. Residues 764 to 784 (IWFHILAGLTHLAVISNAFLL) form a helical membrane-spanning segment. Residues 785 to 843 (AFSSDFLPRAYYRWTRAHDLRGFLNFTLARAPSSFAAAHNRTCRYRAFRDDDGHYSQTY) are Extracellular-facing. N-linked (GlcNAc...) asparagine glycans are attached at residues asparagine 809 and asparagine 824. The helical transmembrane segment at 844–864 (WNLLAIRLAFVIVFEHVVFSV) threads the bilayer. The Cytoplasmic portion of the chain corresponds to 865–933 (GRLLDLLVPD…TVPKASQLQQ (69 aa)). Residues 902–933 (GTNGTKDEQPEGSELSSHWTPFTVPKASQLQQ) are disordered. Positions 915–933 (ELSSHWTPFTVPKASQLQQ) are enriched in polar residues.

Belongs to the anoctamin family. As to expression, specifically expressed in epithelial cells of the prostate (at protein level).

It localises to the cell membrane. The protein localises to the cell junction. The protein resides in the endoplasmic reticulum. It is found in the cytoplasm. Its subcellular location is the cytosol. The enzyme catalyses a 1,2-diacyl-sn-glycero-3-phospho-L-serine(in) = a 1,2-diacyl-sn-glycero-3-phospho-L-serine(out). The catalysed reaction is a beta-D-galactosyl-(1&lt;-&gt;1')-N-acylsphing-4-enine(out) = a beta-D-galactosyl-(1&lt;-&gt;1')-N-acylsphing-4-enine(in). It catalyses the reaction a 1,2-diacyl-sn-glycero-3-phosphocholine(in) = a 1,2-diacyl-sn-glycero-3-phosphocholine(out). In terms of biological role, has calcium-dependent phospholipid scramblase activity; scrambles phosphatidylserine, phosphatidylcholine and galactosylceramide. Does not exhibit calcium-activated chloride channel (CaCC) activity. May play a role in cell-cell interactions. The polypeptide is Anoctamin-7 (ANO7) (Homo sapiens (Human)).